We begin with the raw amino-acid sequence, 440 residues long: 3-phosphoshikimate 1-carboxyvinyltransferase (440 aa).

Positions 25, 26, and 30 each coordinate 3-phosphoshikimate. K25 contributes to the phosphoenolpyruvate binding site. Phosphoenolpyruvate-binding residues include G96 and R124. The 3-phosphoshikimate site is built by S168, Q169, D310, and K337. Position 169 (Q169) interacts with phosphoenolpyruvate. Residue D310 is the Proton acceptor of the active site. 3 residues coordinate phosphoenolpyruvate: R341, R382, and K409.

Belongs to the EPSP synthase family. Monomer.

The protein resides in the cytoplasm. It carries out the reaction 3-phosphoshikimate + phosphoenolpyruvate = 5-O-(1-carboxyvinyl)-3-phosphoshikimate + phosphate. Its pathway is metabolic intermediate biosynthesis; chorismate biosynthesis; chorismate from D-erythrose 4-phosphate and phosphoenolpyruvate: step 6/7. Catalyzes the transfer of the enolpyruvyl moiety of phosphoenolpyruvate (PEP) to the 5-hydroxyl of shikimate-3-phosphate (S3P) to produce enolpyruvyl shikimate-3-phosphate and inorganic phosphate. This is 3-phosphoshikimate 1-carboxyvinyltransferase from Chlamydia trachomatis serovar L2 (strain ATCC VR-902B / DSM 19102 / 434/Bu).